Here is a 395-residue protein sequence, read N- to C-terminus: Putative 8-amino-7-oxononanoate synthase (395 aa).

Arginine 22 is a binding site for substrate. 109–110 (GY) is a pyridoxal 5'-phosphate binding site. Histidine 139 lines the substrate pocket. Pyridoxal 5'-phosphate-binding positions include serine 187, 212–215 (DEAH), and 241–244 (TFSK). Lysine 244 carries the N6-(pyridoxal phosphate)lysine modification. Position 358 (threonine 358) interacts with substrate.

It belongs to the class-II pyridoxal-phosphate-dependent aminotransferase family. BioF subfamily. As to quaternary structure, homodimer. It depends on pyridoxal 5'-phosphate as a cofactor.

The catalysed reaction is 6-carboxyhexanoyl-[ACP] + L-alanine + H(+) = (8S)-8-amino-7-oxononanoate + holo-[ACP] + CO2. It functions in the pathway cofactor biosynthesis; biotin biosynthesis. Its function is as follows. Catalyzes the decarboxylative condensation of pimeloyl-[acyl-carrier protein] and L-alanine to produce 8-amino-7-oxononanoate (AON), [acyl-carrier protein], and carbon dioxide. The protein is Putative 8-amino-7-oxononanoate synthase (bioF) of Magnetococcus marinus (strain ATCC BAA-1437 / JCM 17883 / MC-1).